The chain runs to 409 residues: Dipeptidase 1 (409 aa).

An N-terminal signal peptide occupies residues 1 to 16 (MWTSWWLWPLVAVCAA). Positions 36 and 38 each coordinate Zn(2+). Residue N57 is glycosylated (N-linked (GlcNAc...) asparagine). An intrachain disulfide couples C87 to C170. E141 provides a ligand contact to Zn(2+). H168 contributes to the substrate binding site. Zn(2+) is bound by residues H214 and H235. The cysteines at positions 242 and 274 are disulfide-linked. R246 lines the substrate pocket. A glycan (N-linked (GlcNAc...) asparagine) is linked at N279. D304 lines the substrate pocket. Residue S384 is the site of GPI-anchor amidated serine attachment. Residues 385–409 (AAPSLHLPPGSLLASLVPLLLLSLP) constitute a propeptide, removed in mature form.

Belongs to the metallo-dependent hydrolases superfamily. Peptidase M19 family. Homodimer; disulfide-linked. Requires Zn(2+) as cofactor.

The protein localises to the apical cell membrane. Its subcellular location is the cell projection. The protein resides in the microvillus membrane. It localises to the cell membrane. The enzyme catalyses an L-aminoacyl-L-amino acid + H2O = 2 an L-alpha-amino acid. The catalysed reaction is leukotriene D4 + H2O = leukotriene E4 + glycine. It carries out the reaction L-cystine-bis-glycine + 2 H2O = L-cystine + 2 glycine. It catalyses the reaction a beta-lactam + H2O = a substituted beta-amino acid. The enzyme catalyses glycyldehydrophenylalanine + H2O = 2,3-didehydrophenylalanine + glycine. With respect to regulation, inhibited by L-penicillamine. Inhibited by cilastatin. Functionally, hydrolyzes a wide range of dipeptides. Hydrolyzes the conversion of leukotriene D4 to leukotriene E4. Hydrolyzes cystinyl-bis-glycine (cys-bis-gly) formed during glutathione degradation. Also possesses beta lactamase activity and hydrolytically inactivates beta-lactam antibiotics. Its function is as follows. Independently of its dipeptidase activity, acts as an adhesion receptor for neutrophil recruitment from bloodstream into inflamed lungs and liver. The protein is Dipeptidase 1 (DPEP1) of Sus scrofa (Pig).